The primary structure comprises 201 residues: MQPFTTHTGLAVMIDSTNIDTDQIIPKQFLSKVTRDGFGVHLFHDWRYLDDAGDVPNPEFSLNQPRYKGASILVSQENFGCGSSREHAPWALADFGLRAIIAPSFADIFYGNSINNGLLPVALTHAQVRQLMDEVAAEEGAQITVDLTSCKVISPSGAEFSFTLAESARHKLLNGLDAIGLTLSHAAQISQYETQIQGWRS.

The protein belongs to the LeuD family. LeuD type 1 subfamily. In terms of assembly, heterodimer of LeuC and LeuD.

It catalyses the reaction (2R,3S)-3-isopropylmalate = (2S)-2-isopropylmalate. The protein operates within amino-acid biosynthesis; L-leucine biosynthesis; L-leucine from 3-methyl-2-oxobutanoate: step 2/4. In terms of biological role, catalyzes the isomerization between 2-isopropylmalate and 3-isopropylmalate, via the formation of 2-isopropylmaleate. The protein is 3-isopropylmalate dehydratase small subunit of Shewanella putrefaciens (strain CN-32 / ATCC BAA-453).